Consider the following 172-residue polypeptide: Ribosome maturation factor RimM (172 aa).

Positions 96–168 constitute a PRC barrel domain; the sequence is DGEFYYHEII…RIDVTVLEGL (73 aa).

The protein belongs to the RimM family. As to quaternary structure, binds ribosomal protein uS19.

Its subcellular location is the cytoplasm. In terms of biological role, an accessory protein needed during the final step in the assembly of 30S ribosomal subunit, possibly for assembly of the head region. Essential for efficient processing of 16S rRNA. May be needed both before and after RbfA during the maturation of 16S rRNA. It has affinity for free ribosomal 30S subunits but not for 70S ribosomes. This is Ribosome maturation factor RimM from Streptococcus mutans serotype c (strain ATCC 700610 / UA159).